Consider the following 137-residue polypeptide: Large ribosomal subunit protein uL16 (137 aa).

Over residues 1–17 (MLQPKRTKFRKQQKGRN) the composition is skewed to basic residues. The tract at residues 1-21 (MLQPKRTKFRKQQKGRNRGQA) is disordered.

This sequence belongs to the universal ribosomal protein uL16 family. As to quaternary structure, part of the 50S ribosomal subunit.

In terms of biological role, binds 23S rRNA and is also seen to make contacts with the A and possibly P site tRNAs. The protein is Large ribosomal subunit protein uL16 of Nitrosococcus oceani (strain ATCC 19707 / BCRC 17464 / JCM 30415 / NCIMB 11848 / C-107).